A 624-amino-acid polypeptide reads, in one-letter code: Protein POLLEN DEFECTIVE IN GUIDANCE 1 (624 aa).

The interval 20–63 (SFENDDTSIRRSSSDPITGNVASESPRDYGKRKRSKKKKKKVNQ) is disordered. The span at 33-42 (SDPITGNVAS) shows a compositional bias: polar residues. Residues 49–61 (GKRKRSKKKKKKV) are compositionally biased toward basic residues. The next 6 helical transmembrane spans lie at 263–283 (VLID…LTVM), 305–325 (ASEL…ILLG), 391–411 (FVSD…ILLA), 413–433 (AITL…LLVS), 545–565 (LTFV…PVYA), and 578–598 (LWMV…KVLI).

It belongs to the TAPT1 family. Interacts with CRT3, but not with CRT1 or CNX. Expressed in inflorescences, siliques, roots and shoots. Expressed in early embryo, endosperm, mature pollen and pollen tubes, synergide cells and weakly in antipodal cells.

It is found in the membrane. The protein localises to the endoplasmic reticulum lumen. Its function is as follows. Probable component of the calreticulin 3 (CRT3) complex, acting probably as a co-chaperone involved in protein retention in the endoplasmic reticulum lumen. Required for micropylar pollen tube guidance. Plays an essential role in cell plate orientation or positioning in early embryo patterning. The protein is Protein POLLEN DEFECTIVE IN GUIDANCE 1 (POD1) of Arabidopsis thaliana (Mouse-ear cress).